The sequence spans 231 residues: AA9 family lytic polysaccharide monooxygenase F (231 aa).

A signal peptide spans 1-17 (MLPSISLLLAAALGTSA). The Cu(2+) site is built by His18, Asp50, and His89. An O2-binding site is contributed by Asp50. 2 disulfide bridges follow: Cys59-Cys177 and Cys147-Cys231. Positions 163 and 172 each coordinate O2. Tyr174 contributes to the Cu(2+) binding site.

Belongs to the polysaccharide monooxygenase AA9 family. Cu(2+) serves as cofactor.

The protein localises to the secreted. The enzyme catalyses [(1-&gt;4)-beta-D-glucosyl]n+m + reduced acceptor + O2 = 4-dehydro-beta-D-glucosyl-[(1-&gt;4)-beta-D-glucosyl]n-1 + [(1-&gt;4)-beta-D-glucosyl]m + acceptor + H2O.. Its function is as follows. Lytic polysaccharide monooxygenase (LPMO) that depolymerizes crystalline and amorphous polysaccharides via the oxidation of scissile alpha- or beta-(1-4)-glycosidic bonds, yielding C1 oxidation products. Catalysis by LPMOs requires the reduction of the active-site copper from Cu(II) to Cu(I) by a reducing agent and H(2)O(2) or O(2) as a cosubstrate. The protein is AA9 family lytic polysaccharide monooxygenase F (gh61-6) of Neurospora crassa (strain ATCC 24698 / 74-OR23-1A / CBS 708.71 / DSM 1257 / FGSC 987).